We begin with the raw amino-acid sequence, 99 residues long: Keratinocyte differentiation-associated protein (99 aa).

An N-terminal signal peptide occupies residues 1–22 (MKIPVLPAVVLLSLLALHSAQG).

As to expression, highly expressed in skin, but not detectable in any other tissue examined. Expression restricted to cornified/stratified epithelia and not detected in non-cornified/stratified epithelia.

It localises to the secreted. In terms of biological role, may act as a soluble regulator of keratinocyte differentiation. May play an important role in embryonic skin morphogenesis. In Canis lupus familiaris (Dog), this protein is Keratinocyte differentiation-associated protein.